Reading from the N-terminus, the 594-residue chain is Solute carrier family 13 member 1 (594 aa).

Transmembrane regions (helical) follow at residues 13-33 (FLLV…IRTK), 40-60 (ILFV…ITAL), 77-97 (VASA…CLAT), 113-133 (VMMV…STAF), and 134-154 (LSMW…VEAV). Asn-174 carries an N-linked (GlcNAc...) asparagine glycan. A compositionally biased stretch (basic and acidic residues) spans 192-220 (TNEKKEKTKPAPGSSHDKGKVSRKMETEK). The disordered stretch occupies residues 192 to 226 (TNEKKEKTKPAPGSSHDKGKVSRKMETEKNAVTGA). Transmembrane regions (helical) follow at residues 239–259 (LMCL…ITGT), 283–303 (SWFL…WIWL), 347–367 (IVTL…DPGF), 380–400 (GYVT…LIPA), 461–481 (LSPL…LIVT), 487–507 (ASNP…AEAI), 511–531 (PLQI…LPVA), and 552–572 (AGLG…FTWI). The N-linked (GlcNAc...) asparagine glycan is linked to Asn-590.

The protein belongs to the SLC13A/DASS transporter (TC 2.A.47) family. NADC subfamily. Highly expressed in kidney and ileum, detected at lower levels in duodenum/jejunum and colon, and at very low levels in cecum, testis, adrenal and adipose tissues. In terms of tissue distribution, expressed in the kidney.

Its subcellular location is the apical cell membrane. It carries out the reaction sulfate(out) + 3 Na(+)(out) = sulfate(in) + 3 Na(+)(in). The catalysed reaction is selenate(out) + 3 Na(+)(out) = selenate(in) + 3 Na(+)(in). The enzyme catalyses thiosulfate(out) + 3 Na(+)(out) = thiosulfate(in) + 3 Na(+)(in). In terms of biological role, sodium:sulfate symporter that mediates sulfate reabsorption in the kidney and small intestine. Can also mediate the transport of selenate and thiosulfate. The chain is Solute carrier family 13 member 1 (Slc13a1) from Mus musculus (Mouse).